The chain runs to 206 residues: Large ribosomal subunit protein uL4 (206 aa).

The protein belongs to the universal ribosomal protein uL4 family. Part of the 50S ribosomal subunit.

In terms of biological role, one of the primary rRNA binding proteins, this protein initially binds near the 5'-end of the 23S rRNA. It is important during the early stages of 50S assembly. It makes multiple contacts with different domains of the 23S rRNA in the assembled 50S subunit and ribosome. Forms part of the polypeptide exit tunnel. This Rhodopseudomonas palustris (strain ATCC BAA-98 / CGA009) protein is Large ribosomal subunit protein uL4.